We begin with the raw amino-acid sequence, 306 residues long: MFALAQHTARRTLSRQQWTKVVVSAANYSSGSLSSTIRISSIPAPHTGEITVLSLNRPRARNAISTALLGELNTVVEQLHAQGDKSSTRALILTSESDDAFCAGADLKERLTFTEEDTRNFLKTLRHTFTRLSTLPIPTISAISSIAFGGGLELALCTNFRVLASTASIGLPETRLAIIPGGGGTYRLPALIGETRARDLILTGRRVSGEEAYFIGLADRLVQISEQELGEKGVARGRVLEEATAMAKGICEGGPVAIRAAQAAVSGWRDGEGSENKAYERVIPTKDRLEALTAFGEKRKPSFQGR.

Substrate contacts are provided by residues alanine 103–leucine 107 and glycine 150.

The protein belongs to the enoyl-CoA hydratase/isomerase family.

It catalyses the reaction a (3S)-3-hydroxyacyl-CoA = a (2E)-enoyl-CoA + H2O. It carries out the reaction a 4-saturated-(3S)-3-hydroxyacyl-CoA = a (3E)-enoyl-CoA + H2O. Its pathway is siderophore biosynthesis. Enoyl-CoA isomerase/hydratase involved in the biosynthesis of a ferrichrome A-like siderophore which may contribute to organismal virulence. The first step of siderophore biosynthesis is performed by the HMG-CoA synthase (HMGS) MYCGRDRAFT_54740 which catalyzes the generation of HMG-CoA and CoA using acetoacetyl-CoA and acetyl-CoA as substrates. The enoyl-CoA isomerase/hydratase MYCGRDRAFT_76805 then catalyzes the conversion of HMG-CoA to methylglutaconyl-CoA. The acyltransferase MYCGRDRAFT_85486 then fuses methylglutaconyl-CoA with hydroxyornithine to yield methylglutaconyl hydroxyornithine. Methylglutaconyl hydroxyornithine is then available for use by the nonribosomal peptide synthetase NRPS2 to generate the ferrichrome A-like siderophore. The sequence is that of Enoyl-CoA isomerase/hydratase MYCGRDRAFT_76805 from Zymoseptoria tritici (strain CBS 115943 / IPO323) (Speckled leaf blotch fungus).